The following is a 338-amino-acid chain: Tetraacyldisaccharide 4'-kinase (338 aa).

ATP is bound at residue 65 to 72; the sequence is TVGGTGKT.

Belongs to the LpxK family.

It carries out the reaction a lipid A disaccharide + ATP = a lipid IVA + ADP + H(+). It participates in glycolipid biosynthesis; lipid IV(A) biosynthesis; lipid IV(A) from (3R)-3-hydroxytetradecanoyl-[acyl-carrier-protein] and UDP-N-acetyl-alpha-D-glucosamine: step 6/6. Its function is as follows. Transfers the gamma-phosphate of ATP to the 4'-position of a tetraacyldisaccharide 1-phosphate intermediate (termed DS-1-P) to form tetraacyldisaccharide 1,4'-bis-phosphate (lipid IVA). The chain is Tetraacyldisaccharide 4'-kinase from Paraburkholderia xenovorans (strain LB400).